Here is a 224-residue protein sequence, read N- to C-terminus: Uridylate kinase (224 aa).

8-12 serves as a coordination point for ATP; it reads KITGK. Residue glycine 43 participates in UMP binding. Residues glycine 44 and arginine 48 each coordinate ATP. Residues aspartate 66 and 114–120 contribute to the UMP site; that span reads LIPGQST. Residues serine 140, tyrosine 146, and aspartate 149 each coordinate ATP.

Belongs to the UMP kinase family. As to quaternary structure, homohexamer.

The protein localises to the cytoplasm. It catalyses the reaction UMP + ATP = UDP + ADP. Its pathway is pyrimidine metabolism; CTP biosynthesis via de novo pathway; UDP from UMP (UMPK route): step 1/1. Its activity is regulated as follows. Inhibited by UTP. Its function is as follows. Catalyzes the reversible phosphorylation of UMP to UDP. The protein is Uridylate kinase of Staphylothermus marinus (strain ATCC 43588 / DSM 3639 / JCM 9404 / F1).